Consider the following 738-residue polypeptide: Isocitrate dehydrogenase [NADP] (738 aa).

Residues N83 and S85 each contribute to the NADP(+) site. The D-threo-isocitrate site is built by S130, N133, R137, R143, and K253. N133 serves as a coordination point for NADP(+). D346 provides a ligand contact to Mg(2+). 2 residues coordinate D-threo-isocitrate: Y416 and R543. D544 and D548 together coordinate Mg(2+). The NADP(+) site is built by G580, H585, R596, D598, and R645.

It belongs to the monomeric-type IDH family. As to quaternary structure, monomer. Requires Mg(2+) as cofactor. The cofactor is Mn(2+).

Its subcellular location is the cytoplasm. The catalysed reaction is D-threo-isocitrate + NADP(+) = 2-oxoglutarate + CO2 + NADPH. Weakly inhibited by oxaloacetate, 2-oxoglutarate and citrate. Severely inhibited by oxaloacetate plus glyoxylate. Catalyzes the oxidative decarboxylation of isocitrate to 2-oxoglutarate and carbon dioxide with the concomitant reduction of NADP(+). Cannot use NAD(+). This chain is Isocitrate dehydrogenase [NADP], found in Corynebacterium glutamicum (strain ATCC 13032 / DSM 20300 / JCM 1318 / BCRC 11384 / CCUG 27702 / LMG 3730 / NBRC 12168 / NCIMB 10025 / NRRL B-2784 / 534).